The sequence spans 284 residues: tRNA dimethylallyltransferase (284 aa).

6–13 (GPTASGKS) is an ATP binding site. 8 to 13 (TASGKS) lines the substrate pocket. Positions 31 to 34 (DSLS) are interaction with substrate tRNA.

Belongs to the IPP transferase family. Monomer. Requires Mg(2+) as cofactor.

The catalysed reaction is adenosine(37) in tRNA + dimethylallyl diphosphate = N(6)-dimethylallyladenosine(37) in tRNA + diphosphate. Its function is as follows. Catalyzes the transfer of a dimethylallyl group onto the adenine at position 37 in tRNAs that read codons beginning with uridine, leading to the formation of N6-(dimethylallyl)adenosine (i(6)A). This is tRNA dimethylallyltransferase from Nautilia profundicola (strain ATCC BAA-1463 / DSM 18972 / AmH).